Reading from the N-terminus, the 457-residue chain is Bifunctional protein GlmU (457 aa).

The pyrophosphorylase stretch occupies residues 1 to 236 (MDQDACTHSA…DWHFLGVNTP (236 aa)). UDP-N-acetyl-alpha-D-glucosamine contacts are provided by residues 14 to 17 (LAAG), Lys-28, Gln-79, and 84 to 85 (GT). Asp-110 contacts Mg(2+). Gly-145, Glu-159, Asn-176, and Asn-234 together coordinate UDP-N-acetyl-alpha-D-glucosamine. Asn-234 contributes to the Mg(2+) binding site. Residues 237 to 257 (KDLSYVESIQQAFIIEKLLQS) form a linker region. Residues 258–457 (GVIIHSPESV…GKQKNFSKRK (200 aa)) are N-acetyltransferase. Residues Arg-340 and Lys-358 each contribute to the UDP-N-acetyl-alpha-D-glucosamine site. Catalysis depends on His-370, which acts as the Proton acceptor. The UDP-N-acetyl-alpha-D-glucosamine site is built by Tyr-373 and Asn-384. Acetyl-CoA contacts are provided by residues Ala-387, 393–394 (NY), Ser-412, Ala-430, and Arg-447.

It in the N-terminal section; belongs to the N-acetylglucosamine-1-phosphate uridyltransferase family. This sequence in the C-terminal section; belongs to the transferase hexapeptide repeat family. As to quaternary structure, homotrimer. Mg(2+) serves as cofactor.

The protein resides in the cytoplasm. It carries out the reaction alpha-D-glucosamine 1-phosphate + acetyl-CoA = N-acetyl-alpha-D-glucosamine 1-phosphate + CoA + H(+). The enzyme catalyses N-acetyl-alpha-D-glucosamine 1-phosphate + UTP + H(+) = UDP-N-acetyl-alpha-D-glucosamine + diphosphate. It participates in nucleotide-sugar biosynthesis; UDP-N-acetyl-alpha-D-glucosamine biosynthesis; N-acetyl-alpha-D-glucosamine 1-phosphate from alpha-D-glucosamine 6-phosphate (route II): step 2/2. Its pathway is nucleotide-sugar biosynthesis; UDP-N-acetyl-alpha-D-glucosamine biosynthesis; UDP-N-acetyl-alpha-D-glucosamine from N-acetyl-alpha-D-glucosamine 1-phosphate: step 1/1. The protein operates within bacterial outer membrane biogenesis; LPS lipid A biosynthesis. Its function is as follows. Catalyzes the last two sequential reactions in the de novo biosynthetic pathway for UDP-N-acetylglucosamine (UDP-GlcNAc). The C-terminal domain catalyzes the transfer of acetyl group from acetyl coenzyme A to glucosamine-1-phosphate (GlcN-1-P) to produce N-acetylglucosamine-1-phosphate (GlcNAc-1-P), which is converted into UDP-GlcNAc by the transfer of uridine 5-monophosphate (from uridine 5-triphosphate), a reaction catalyzed by the N-terminal domain. This chain is Bifunctional protein GlmU, found in Lawsonia intracellularis (strain PHE/MN1-00).